A 709-amino-acid polypeptide reads, in one-letter code: Cell adhesion molecule CEACAM3 (709 aa).

The N-terminal stretch at 1–34 is a signal peptide; sequence MELSSVLPCKRCTPWRGLLLTASLLTCWLLPTTA. 5 consecutive Ig-like V-type domains span residues 35–142, 155–262, 275–382, 393–500, and 509–616; these read QVSI…HVYF, QLSI…QVDT, QLTV…QVNT, LLTI…SVHT, and QLVI…HIYK. 16 N-linked (GlcNAc...) asparagine glycosylation sites follow: N73, N86, N103, N110, N133, N207, N224, N231, N327, N344, N351, N381, N462, N561, N578, and N585. Residues 631–695 form the Ig-like C2-type domain; the sequence is RVKSSVVLTC…YRCEVSNPVS (65 aa).

The protein belongs to the immunoglobulin superfamily. CEA family. In terms of tissue distribution, expression detected only in placenta.

Functionally, possibly involved in cell adhesion. The protein is Cell adhesion molecule CEACAM3 of Rattus norvegicus (Rat).